A 331-amino-acid chain; its full sequence is Endo-1,4-beta-xylanase 2 (331 aa).

A signal peptide spans 1–17; that stretch reads MKASSVLLGLAPLAALA. The GH10 domain occupies 31-329; that stretch reads QQSIDALMKA…KPAYNSVVQA (299 aa). A glycan (N-linked (GlcNAc...) asparagine) is linked at Asn105. Glu159 acts as the Proton donor in catalysis. Glu266 acts as the Nucleophile in catalysis. The cysteines at positions 284 and 290 are disulfide-linked. N-linked (GlcNAc...) asparagine glycosylation occurs at Asn301.

This sequence belongs to the glycosyl hydrolase 10 (cellulase F) family.

The protein localises to the secreted. It carries out the reaction Endohydrolysis of (1-&gt;4)-beta-D-xylosidic linkages in xylans.. Its pathway is glycan degradation; xylan degradation. Endo-1,4-beta-xylanase involved in the hydrolysis of xylan, a major structural heterogeneous polysaccharide found in plant biomass representing the second most abundant polysaccharide in the biosphere, after cellulose. Accounts for approximately 70 percent of the endoxylanase activity in the culture filtrate. The sequence is that of Endo-1,4-beta-xylanase 2 (XYL2) from Pyricularia grisea (Crabgrass-specific blast fungus).